The chain runs to 339 residues: Glyceraldehyde-3-phosphate dehydrogenase (339 aa).

Residues 12–13 (RI), aspartate 39, arginine 84, and serine 127 each bind NAD(+). Residues 157 to 159 (SCT), threonine 188, arginine 203, 216 to 217 (TG), and arginine 239 each bind D-glyceraldehyde 3-phosphate. The active-site Nucleophile is the cysteine 158. Residue asparagine 320 coordinates NAD(+).

Belongs to the glyceraldehyde-3-phosphate dehydrogenase family. As to quaternary structure, homotetramer.

It localises to the cytoplasm. It catalyses the reaction D-glyceraldehyde 3-phosphate + phosphate + NAD(+) = (2R)-3-phospho-glyceroyl phosphate + NADH + H(+). Its pathway is carbohydrate degradation; glycolysis; pyruvate from D-glyceraldehyde 3-phosphate: step 1/5. Catalyzes the oxidative phosphorylation of glyceraldehyde 3-phosphate (G3P) to 1,3-bisphosphoglycerate (BPG) using the cofactor NAD. The first reaction step involves the formation of a hemiacetal intermediate between G3P and a cysteine residue, and this hemiacetal intermediate is then oxidized to a thioester, with concomitant reduction of NAD to NADH. The reduced NADH is then exchanged with the second NAD, and the thioester is attacked by a nucleophilic inorganic phosphate to produce BPG. In Mycobacterium bovis (strain ATCC BAA-935 / AF2122/97), this protein is Glyceraldehyde-3-phosphate dehydrogenase (gap).